Consider the following 190-residue polypeptide: Histone H5 (190 aa).

The tract at residues 1-29 is disordered; the sequence is MTESLVLSPAPAKPKRVKASRRSASHPTY. A compositionally biased stretch (basic residues) spans 13-24; that stretch reads KPKRVKASRRSA. Phosphoserine occurs at positions 23, 30, 146, and 167. In terms of domain architecture, H15 spans 25–98; the sequence is SHPTYSEMIA…GASGSFRLAK (74 aa). Positions 87-190 are disordered; the sequence is GVGASGSFRL…SGARKSPKKK (104 aa). Over residues 104-190 the composition is skewed to basic residues; that stretch reads RSPGKKKKAV…SGARKSPKKK (87 aa).

The protein belongs to the histone H1/H5 family. Erythroid cells.

It localises to the nucleus. The protein resides in the chromosome. Histone H5 performs the same function as H1, being necessary for the condensation of nucleosome chains into higher order structures, and replaces histone H1 in certain cells. This Gallus gallus (Chicken) protein is Histone H5.